The sequence spans 247 residues: MSHRDTLFSAPIASLGDWTFDERVAEVFPDMIQRSVPGYSNIISMIGMLAERFVQPNTQVYDLGCSLGAATLSVRRNIHHANCKIIAVDNSPAMIERCRRHIDAYKAPTPVEIVEGDIRDISIENASMVVLNFTLQFLEPLERQALLDKIYQGLNPGGALVLSEKFSFKDTTVGELLFNMHHDFKRANGYSELEISQKRSMLENVMLTDSVETHKARLHQAGFEHSELWFQCFNFGSLVALKSGVPA.

Residues Y39, 64–66 (GCS), 89–90 (DN), 117–118 (DI), N132, and R199 contribute to the S-adenosyl-L-methionine site.

Belongs to the class I-like SAM-binding methyltransferase superfamily. Cx-SAM synthase family. In terms of assembly, homodimer.

The enzyme catalyses prephenate + S-adenosyl-L-methionine = carboxy-S-adenosyl-L-methionine + 3-phenylpyruvate + H2O. Functionally, catalyzes the conversion of S-adenosyl-L-methionine (SAM) to carboxy-S-adenosyl-L-methionine (Cx-SAM). This chain is Carboxy-S-adenosyl-L-methionine synthase, found in Citrobacter koseri (strain ATCC BAA-895 / CDC 4225-83 / SGSC4696).